The sequence spans 764 residues: Cyclin-F (764 aa).

Residues 19–27 carry the Nuclear localization signal 1 motif; the sequence is RKRVRKRAS. An F-box domain is found at 28–75; that stretch reads AVSLLSLPEELLVFVLQCLSAEDLLSVRAVHSHLCDIIDTNASIWARV. In terms of domain architecture, Cyclin N-terminal spans 307–404; sequence TKRYILVDWL…EVISVLDGKI (98 aa). The D box 1 motif lies at 309 to 312; the sequence is RYIL. Residues 570 to 575 carry the Nuclear localization signal 2 motif; that stretch reads SSKRRR. Residues 583–738 are PEST; that stretch reads RGAFVATPTA…PSQRIRRQVK (156 aa). The segment at 662 to 754 is disordered; it reads CEEDEQEPPT…HSAGEAEQED (93 aa). A compositionally biased stretch (low complexity) spans 682–692; it reads SSSSTSSSSSS. Positions 702–722 are enriched in polar residues; sequence SGYSSIQSFPSPTGSSALVSP. A compositionally biased stretch (basic residues) spans 732 to 742; it reads RIRRQVKRKNT.

This sequence belongs to the cyclin family. Cyclin AB subfamily. In terms of assembly, component of the SCF(CCNF) complex. In terms of tissue distribution, expressed in the brain.

It localises to the nucleus. The protein resides in the cytoplasm. It is found in the perinuclear region. Its subcellular location is the cytoskeleton. The protein localises to the microtubule organizing center. It localises to the centrosome. The protein resides in the centriole. Functionally, substrate recognition component of a SCF (SKP1-CUL1-F-box protein) E3 ubiquitin-protein ligase complex which mediates the ubiquitination and subsequent proteasomal degradation of target proteins. The SCF(CCNF) E3 ubiquitin-protein ligase complex is an integral component of the ubiquitin proteasome system (UPS) and links proteasome degradation to the cell cycle. Mediates the substrate recognition and the proteasomal degradation of various target proteins during G2 phase involved in the regulation of cell cycle progression and in the maintenance of genome stability. May play a role in motor neuron development and axonal outgrowth. The polypeptide is Cyclin-F (ccnf) (Danio rerio (Zebrafish)).